The sequence spans 224 residues: Dimethyl sulfoxide reductase transcriptional activator (224 aa).

Residues 158–209 (LTDKQREAAAAAVAKGYYATPRGADLSDLATALGISKSAVSQRLSAVESKLA) enclose the HTH bat-type domain.

Involved in activating dmsEABCD gene expression related to dimethyl sulfoxide (DMSO) reductase. Required for anaerobic respiration on dimethyl sulfoxide (DMSO) and trimethylamine N-oxide (TMAO). The protein is Dimethyl sulfoxide reductase transcriptional activator (dmsR) of Halobacterium salinarum (strain ATCC 700922 / JCM 11081 / NRC-1) (Halobacterium halobium).